Consider the following 505-residue polypeptide: Lysine--tRNA ligase 1 (505 aa).

Residues D415 and E422 each contribute to the Mg(2+) site.

The protein belongs to the class-II aminoacyl-tRNA synthetase family. As to quaternary structure, homodimer. It depends on Mg(2+) as a cofactor.

The protein localises to the cytoplasm. It catalyses the reaction tRNA(Lys) + L-lysine + ATP = L-lysyl-tRNA(Lys) + AMP + diphosphate. The sequence is that of Lysine--tRNA ligase 1 (lysS1) from Mycobacterium bovis (strain ATCC BAA-935 / AF2122/97).